The primary structure comprises 236 residues: Leucyl/phenylalanyl-tRNA--protein transferase (236 aa).

This sequence belongs to the L/F-transferase family.

It is found in the cytoplasm. The enzyme catalyses N-terminal L-lysyl-[protein] + L-leucyl-tRNA(Leu) = N-terminal L-leucyl-L-lysyl-[protein] + tRNA(Leu) + H(+). The catalysed reaction is N-terminal L-arginyl-[protein] + L-leucyl-tRNA(Leu) = N-terminal L-leucyl-L-arginyl-[protein] + tRNA(Leu) + H(+). It catalyses the reaction L-phenylalanyl-tRNA(Phe) + an N-terminal L-alpha-aminoacyl-[protein] = an N-terminal L-phenylalanyl-L-alpha-aminoacyl-[protein] + tRNA(Phe). Functionally, functions in the N-end rule pathway of protein degradation where it conjugates Leu, Phe and, less efficiently, Met from aminoacyl-tRNAs to the N-termini of proteins containing an N-terminal arginine or lysine. The sequence is that of Leucyl/phenylalanyl-tRNA--protein transferase from Shewanella woodyi (strain ATCC 51908 / MS32).